Reading from the N-terminus, the 32-residue chain is Cytochrome c3, 10 kDa (32 aa).

Residues H16, C25, C28, and H29 each coordinate heme.

Monomer. In terms of processing, binds 1 heme group per subunit.

It is found in the periplasm. Participates in sulfate respiration coupled with phosphorylation by transferring electrons from the enzyme dehydrogenase to ferredoxin. This Desulfuromonas acetoxidans (Chloropseudomonas ethylica) protein is Cytochrome c3, 10 kDa.